The chain runs to 286 residues: Bifunctional protein FolD (286 aa).

Residues G166–S168 and I232 each bind NADP(+).

The protein belongs to the tetrahydrofolate dehydrogenase/cyclohydrolase family. In terms of assembly, homodimer.

It catalyses the reaction (6R)-5,10-methylene-5,6,7,8-tetrahydrofolate + NADP(+) = (6R)-5,10-methenyltetrahydrofolate + NADPH. It carries out the reaction (6R)-5,10-methenyltetrahydrofolate + H2O = (6R)-10-formyltetrahydrofolate + H(+). It participates in one-carbon metabolism; tetrahydrofolate interconversion. In terms of biological role, catalyzes the oxidation of 5,10-methylenetetrahydrofolate to 5,10-methenyltetrahydrofolate and then the hydrolysis of 5,10-methenyltetrahydrofolate to 10-formyltetrahydrofolate. This Vibrio campbellii (strain ATCC BAA-1116) protein is Bifunctional protein FolD.